A 393-amino-acid chain; its full sequence is E3 ubiquitin-protein transferase RMND5B (393 aa).

Position 1 is an N-acetylmethionine (Met-1). The region spanning 116–148 is the LisH domain; sequence QQQILQMAIVEHLYQQGMLSVAEELCQESTLNV. Residues 155-212 enclose the CTLH domain; sequence PFLELNRILEALHEQDLGPALEWAVSHRQRLLELNSSLEFKLHRLHFIRLLAGGPAKQ. The RING-Gid-type zinc finger occupies 338–379; it reads CPILRQQTSDSNPPIKLICGHVISRDALNKLINGGKLKCPYC.

In terms of assembly, identified in the CTLH complex that contains GID4, RANBP9 and/or RANBP10, MKLN1, MAEA, RMND5A (or alternatively its paralog RMND5B), GID8, ARMC8, WDR26 and YPEL5. Within this complex, MAEA, RMND5A (or alternatively its paralog RMND5B), GID8, WDR26, and RANBP9 and/or RANBP10 form the catalytic core, while GID4, MKLN1, ARMC8 and YPEL5 have ancillary roles.

The protein localises to the cytoplasm. Its subcellular location is the cytosol. The catalysed reaction is S-ubiquitinyl-[E2 ubiquitin-conjugating enzyme]-L-cysteine + [acceptor protein]-L-lysine = [E2 ubiquitin-conjugating enzyme]-L-cysteine + N(6)-ubiquitinyl-[acceptor protein]-L-lysine.. In terms of biological role, core component of the CTLH E3 ubiquitin-protein ligase complex that selectively accepts ubiquitin from UBE2H and mediates ubiquitination and subsequent proteasomal degradation of the transcription factor HBP1. MAEA and RMND5A are both required for catalytic activity of the CTLH E3 ubiquitin-protein ligase complex. Catalytic activity of the complex is required for normal cell proliferation. The CTLH E3 ubiquitin-protein ligase complex is not required for the degradation of enzymes involved in gluconeogenesis, such as FBP1. The sequence is that of E3 ubiquitin-protein transferase RMND5B (RMND5B) from Homo sapiens (Human).